The primary structure comprises 1155 residues: uncharacterized protein (1155 aa).

The N-terminal stretch at 1-19 (MKKNIFITSLLILLLLLSS) is a signal peptide. C20 is lipidated: N-palmitoyl cysteine. C20 carries S-diacylglycerol cysteine lipidation. Transmembrane regions (helical) follow at residues 289 to 309 (ISVSAILTLYIMFTVLSFLIG), 395 to 415 (LGFIYIILYLIALYFIFFLIF), 424 to 444 (ALITIGMIIIMGPIFICFMLF), and 459 to 479 (ISYALQPIILFAGIAFISMII).

This sequence belongs to the TrbL/VirB6 family.

It is found in the cell membrane. This is an uncharacterized protein from Rickettsia prowazekii (strain Madrid E).